The following is a 2548-amino-acid chain: Variant-silencing SET domain-containing protein (2548 aa).

The span at 37-48 (IDDDDDDDNDNN) shows a compositional bias: acidic residues. 3 disordered regions span residues 37-61 (IDDDDDDDNDNNEEPKEMNINKTNN), 336-379 (GDPK…DDDN), and 585-629 (SVDR…NTQT). Residues 336-357 (GDPKKRIERNKQEIEDHRREQD) show a composition bias toward basic and acidic residues. Residues 358–378 (GENDQEEDNYDDYDDEDDDDD) are compositionally biased toward acidic residues. Residues 602–616 (NGSNNNNSSSNNNNN) are compositionally biased toward low complexity. The span at 617 to 629 (ITHITNDCDNTQT) shows a compositional bias: polar residues. Residues 787 to 846 (FYLCEFCEQNIFDMNNMIKKDKAKECMYRCNISCGRTFHKACVCYIKNNDNYICFFCLYD) form a PHD-type 1 zinc finger. Basic residues predominate over residues 929-944 (IKRRHIYRKRRRRGPR). 4 disordered regions span residues 929-1054 (IKRR…CDEN), 1546-1575 (EKNTKNKLCNNDNNNNNNNKGKNTKYNTLD), 1713-1732 (EQGSINNAKHNEQGSINNAK), and 1772-1822 (INNA…DDHR). Acidic residues predominate over residues 986–1016 (DNNDDNNDNNDDNNDNNDDNNDNNDNNDDNN). Low complexity-rich tracts occupy residues 1017 to 1050 (NDNNNNNNNDNNDNNNNNNNNNNNNDNDNNNNNN) and 1551 to 1572 (NKLCNNDNNNNNNNKGKNTKYN). Residues 1714-1732 (QGSINNAKHNEQGSINNAK) show a composition bias toward polar residues. The AWS domain maps to 2067–2117 (SDDYKCLCQGECNLYTCYNSLSNIQCSKSRCNLPEKIQDRKCFNRPFRKSF). An SET domain is found at 2119-2240 (KDLEIKKTEK…SGEEITYNYS (122 aa)). Tyr-2239 contacts S-adenosyl-L-methionine. The PHD-type 2 zinc finger occupies 2423-2471 (DEVCRKCKSCGNLTMCDKCFQSYHQLCGNMHSKMYKNNELVLCRFCQKY).

The protein belongs to the class V-like SAM-binding methyltransferase superfamily.

It is found in the nucleus. The protein localises to the chromosome. The enzyme catalyses L-lysyl(36)-[histone H3] + 3 S-adenosyl-L-methionine = N(6),N(6),N(6)-trimethyl-L-lysyl(36)-[histone H3] + 3 S-adenosyl-L-homocysteine + 3 H(+). Its function is as follows. Histone methyltransferase that specifically represses expression of the surface antigen-coding var genes by mediating trimethylation of 'Lys-36' of histone H3 (H3K36me3) on var genes. SETVS-dependent H3K36me3 is specifically involved in var genes silencing, a central step malaria pathogenesis: each parasite contains 60 distinct var genes that each code for a different PfEMP1 protein. During infection, the clonal parasite population expresses only 1 gene at a time, while the 59 other var genes are silenced. The parasite then switches to the expression of a new variant antigen as an immune-evasion mechanism to avoid the host antibody response. Represses expression of both var mRNA and antisense long non-coding RNA. This chain is Variant-silencing SET domain-containing protein (SETVS), found in Plasmodium falciparum (isolate 3D7).